Here is a 210-residue protein sequence, read N- to C-terminus: Orotate phosphoribosyltransferase (210 aa).

Residues R94, K98, H100, and 120-128 contribute to the 5-phospho-alpha-D-ribose 1-diphosphate site; that span reads EDLISTGGS. S124 contributes to the orotate binding site.

This sequence belongs to the purine/pyrimidine phosphoribosyltransferase family. PyrE subfamily. Homodimer. It depends on Mg(2+) as a cofactor.

The catalysed reaction is orotidine 5'-phosphate + diphosphate = orotate + 5-phospho-alpha-D-ribose 1-diphosphate. The protein operates within pyrimidine metabolism; UMP biosynthesis via de novo pathway; UMP from orotate: step 1/2. Functionally, catalyzes the transfer of a ribosyl phosphate group from 5-phosphoribose 1-diphosphate to orotate, leading to the formation of orotidine monophosphate (OMP). In Bacillus cereus (strain G9842), this protein is Orotate phosphoribosyltransferase.